Here is a 360-residue protein sequence, read N- to C-terminus: Ribosomal RNA large subunit methyltransferase M (360 aa).

S-adenosyl-L-methionine-binding positions include Ser190, 223–226 (CPGG), Asp242, Asp262, and Asp280. Lys309 serves as the catalytic Proton acceptor.

Belongs to the class I-like SAM-binding methyltransferase superfamily. RNA methyltransferase RlmE family. RlmM subfamily. Monomer.

The protein localises to the cytoplasm. It carries out the reaction cytidine(2498) in 23S rRNA + S-adenosyl-L-methionine = 2'-O-methylcytidine(2498) in 23S rRNA + S-adenosyl-L-homocysteine + H(+). In terms of biological role, catalyzes the 2'-O-methylation at nucleotide C2498 in 23S rRNA. The sequence is that of Ribosomal RNA large subunit methyltransferase M from Haemophilus ducreyi (strain 35000HP / ATCC 700724).